Here is a 569-residue protein sequence, read N- to C-terminus: MSFQIETVPTKPYEDQKPGTSGLRKKTKVFKDEPNYTENFIQSIMEAIPEGSKGATLVVGGDGRYYNDVILHKIAAIGAANGIKKLVIGQHGLLSTPAASHIMRTYEEKCTGGIILTASHNPGGPENDMGIKYNLSNGGPAPESVTNAIWEISKKLTSYKIIKDFPELDLGTIGKNKKYGPLLVDIIDITKDYVNFLKEIFDFDLIKKFIDNQRSTKNWKLLFDSMNGVTGPYGKAIFVDEFGLPADEVLQNWHPSPDFGGMHPDPNLTYASSLVKRVDREKIEFGAASDGDGDRNMIYGYGPSFVSPGDSVAIIAEYAAEIPYFAKQGIYGLARSFPTSGAIDRVAKAHGLNCYEVPTGWKFFCALFDAKKLSICGEESFGTGSNHVREKDGVWAIMAWLNILAIYNKHHPENEASIKTIQNEFWAKYGRTFFTRYDFEKVETEKANKIVDQLRAYVTKSGVVNSAFPADESLKVTDCGDFSYTDLDGSVSDHQGLYVKLSNGARFVLRLSGTGSSGATIRLYIEKYCDDKSQYQKTAEEYLKPIINSVIKFLNFKQVLGTEEPTVRT.

The interval 1–23 (MSFQIETVPTKPYEDQKPGTSGL) is disordered. Residue Ser-2 is modified to N-acetylserine. Arg-24 lines the alpha-D-glucose 1,6-bisphosphate pocket. Phosphothreonine occurs at positions 111 and 117. Ser-119 provides a ligand contact to alpha-D-glucose 1,6-bisphosphate. Ser-119 functions as the Phosphoserine intermediate in the catalytic mechanism. Residues Ser-119, Asp-290, Asp-292, and Asp-294 each coordinate Mg(2+). Ser-119 carries the phosphoserine modification. Alpha-D-glucose 1,6-bisphosphate contacts are provided by Asp-294, Arg-295, Thr-359, Glu-378, Ser-380, and Lys-391.

The protein belongs to the phosphohexose mutase family. As to quaternary structure, monomer. Mg(2+) serves as cofactor. Requires Zn(2+) as cofactor. Post-translationally, O-glycosylated with mannose residues. Substrate of UDP-glucose--glycoprotein glucose phosphotransferase, linking glucose in a phosphodiester linkage to O-linked mannose.

It localises to the cytoplasm. It carries out the reaction alpha-D-glucose 1-phosphate = alpha-D-glucose 6-phosphate. The enzyme catalyses O-phospho-L-seryl-[protein] + alpha-D-glucose 1-phosphate = alpha-D-glucose 1,6-bisphosphate + L-seryl-[protein]. It catalyses the reaction alpha-D-glucose 1,6-bisphosphate + L-seryl-[protein] = O-phospho-L-seryl-[protein] + alpha-D-glucose 6-phosphate. Its function is as follows. Major phosphoglucomutase isozyme that catalyzes the reversible isomerization of alpha-D-glucose 1-phosphate to alpha-D-glucose 6-phosphate. The mechanism proceeds via the intermediate compound alpha-D-glucose 1,6-bisphosphate. Constitutes about 80-90% of the phosphoglucomutase activity in the cell. Key enzyme in hexose metabolism. The forward reaction is an essential step in the energy metabolism of galactose since the product of the galactose pathway enzymes in yeast is glucose 1-phosphate. The reverse reaction is an essential step for biosynthesis when carbon sources other than galactose are the energy source because glucose 1-phosphate is the starting point for the synthesis of UDP-glucose, which acts as a precursor for the synthesis of oligosaccharides and trehalose. This is Phosphoglucomutase 2 from Saccharomyces cerevisiae (strain ATCC 204508 / S288c) (Baker's yeast).